The sequence spans 3955 residues: Nonribosomal peptide synthetase fmqA (3955 aa).

An adenylation 1 region spans residues 293–691 (SYSELETLSL…AQACCTIRNV (399 aa)). Positions 806–879 (THKETLIHQL…DLARLTDVVN (74 aa)) constitute a Carrier 1 domain. Residue S840 is modified to O-(pantetheine 4'-phosphoryl)serine. The interval 916–1187 (QDIYPCTPLQ…IATVPLRVRL (272 aa)) is condensation 1. The segment at 1371–1766 (TYAELGELSD…DEVEKHVYQC (396 aa)) is adenylation 2. The 77-residue stretch at 1880–1956 (EPTSVAEREM…KIMSHESSLS (77 aa)) folds into the Carrier 2 domain. S1917 carries the O-(pantetheine 4'-phosphoryl)serine modification. The interval 1970-2261 (FALSPIQQMF…FTTMWPVVAE (292 aa)) is epimerase. Residues 2438–2724 (EDIYPCSPSQ…FNPLPCRVHL (287 aa)) form a condensation 2 region. The interval 2906 to 3299 (TYGQLDELSS…GEVEANVQHC (394 aa)) is adenylation 3. Residues 3422 to 3498 (APSTEEEKKL…DLAKVAVPKS (77 aa)) form the Carrier 3 domain. S3459 is modified (O-(pantetheine 4'-phosphoryl)serine). Residues 3541-3805 (PGTQAQQFFI…CLNFIPLRVM (265 aa)) are condensation 3.

Belongs to the NRP synthetase family. Interacts with the mitogen-activated protein kinase mpkA.

The protein resides in the cytoplasmic vesicle. The protein operates within alkaloid biosynthesis. In terms of biological role, nonribosomal peptide synthetase; part of the gene cluster that mediates the biosynthesis of the antitumor fumiquinazolines that confer a dual-usage capability to defend against phagocytes in the environment and animal hosts. The simplest member is fumiquinazoline F (FQF) with a 6-6-6 tricyclic core derived from anthranilic acid (Ant), tryptophan (Trp), and alanine (Ala). The trimodular NRPS fmqA is responsible for FQF formation. Modules 1, 2 and 3 of fmqA are predicted to activate and load Ant, Trp and Ala, respectively, providing for the assembly of an Ant-Trp-Ala-S-enzyme intermediate that would undergo double cyclization for chain release and generation of the tricyclic 6-6-6 product fumiquinazoline F. The presence of an E domain predicted for module 2 of fmqA is consistent with epimerization of L-Trp to D-Trp during assembly to generate the R-stereocenter at C14 of FQF. The FAD-dependent monooxygenase fmqB and the monomodular NRPS fmqC then maturate FQF to FQA. FmqB oxidizes the 2',3'-double bond of the indole side chain of FQF, and fmqC activates L-Ala as the adenylate, installs it as the pantetheinyl thioester on its carrier protein domain, and acylates the oxidized indole for subsequent intramolecular cyclization to create the 6-5-5-imidazolindolone of FQA. The FAD-linked oxidoreductase fmqD introduces a third layer of scaffold complexity by converting FQA to the spirohemiaminal FQC, presumably by catalyzing the formation of a transient imine within the pyrazinone ring. FQC subsequently converts nonenzymatically to the known cyclic aminal FQD. The protein is Nonribosomal peptide synthetase fmqA of Aspergillus fumigatus (strain ATCC MYA-4609 / CBS 101355 / FGSC A1100 / Af293) (Neosartorya fumigata).